The chain runs to 626 residues: Chaperone protein HtpG (626 aa).

The segment at 1-339 (MSTNQETRGF…SNDLPLNVSR (339 aa)) is a; substrate-binding. Residues 340–555 (EILQDNKVTA…NDQMTTQMAK (216 aa)) form a b region. The segment at 556–626 (LFAAAGQPVP…FIKRVNSLLS (71 aa)) is c.

The protein belongs to the heat shock protein 90 family. Homodimer.

It is found in the cytoplasm. Functionally, molecular chaperone. Has ATPase activity. The sequence is that of Chaperone protein HtpG from Histophilus somni (strain 129Pt) (Haemophilus somnus).